The sequence spans 218 residues: Adenylate kinase (218 aa).

10–15 serves as a coordination point for ATP; that stretch reads GAGKGT. The NMP stretch occupies residues 30-59; sequence STGDMLRAAVKAGTPLGQQAKAVMDAGKLV. AMP is bound by residues Thr-31, Arg-36, 57–59, 85–88, and Gln-92; these read KLV and GFPR. An LID region spans residues 122–159; it reads GRRSHPASGRTYHVKFNPPKVEGKDDVTGEDLIQREDD. Residues Arg-123 and 132-133 each bind ATP; that span reads TY. Residues 127-147 form a disordered region; the sequence is PASGRTYHVKFNPPKVEGKDD. AMP is bound by residues Arg-156 and Arg-167. Gly-203 lines the ATP pocket.

The protein belongs to the adenylate kinase family. Monomer.

It localises to the cytoplasm. It catalyses the reaction AMP + ATP = 2 ADP. Its pathway is purine metabolism; AMP biosynthesis via salvage pathway; AMP from ADP: step 1/1. Catalyzes the reversible transfer of the terminal phosphate group between ATP and AMP. Plays an important role in cellular energy homeostasis and in adenine nucleotide metabolism. The sequence is that of Adenylate kinase from Paracidovorax citrulli (strain AAC00-1) (Acidovorax citrulli).